The primary structure comprises 68 residues: ATP synthase subunit c (68 aa).

Transmembrane regions (helical) follow at residues 5–25 (AAAI…GMIV) and 47–67 (FIGV…AFMV).

The protein belongs to the ATPase C chain family. As to quaternary structure, F-type ATPases have 2 components, F(1) - the catalytic core - and F(0) - the membrane proton channel. F(1) has five subunits: alpha(3), beta(3), gamma(1), delta(1), epsilon(1). F(0) has three main subunits: a(1), b(2) and c(10-14). The alpha and beta chains form an alternating ring which encloses part of the gamma chain. F(1) is attached to F(0) by a central stalk formed by the gamma and epsilon chains, while a peripheral stalk is formed by the delta and b chains.

The protein localises to the cell membrane. In terms of biological role, f(1)F(0) ATP synthase produces ATP from ADP in the presence of a proton or sodium gradient. F-type ATPases consist of two structural domains, F(1) containing the extramembraneous catalytic core and F(0) containing the membrane proton channel, linked together by a central stalk and a peripheral stalk. During catalysis, ATP synthesis in the catalytic domain of F(1) is coupled via a rotary mechanism of the central stalk subunits to proton translocation. Functionally, key component of the F(0) channel; it plays a direct role in translocation across the membrane. A homomeric c-ring of between 10-14 subunits forms the central stalk rotor element with the F(1) delta and epsilon subunits. This chain is ATP synthase subunit c, found in Oceanobacillus iheyensis (strain DSM 14371 / CIP 107618 / JCM 11309 / KCTC 3954 / HTE831).